The following is a 1016-amino-acid chain: Calmodulin-binding transcription activator 4 (1016 aa).

The CG-1 DNA-binding region spans 38–164 (ISTLYQEAHS…YRDVSEREEG (127 aa)). Positions 324–343 (KNGSGPSGGTGGSGDQGSES) are disordered. Positions 328–338 (GPSGGTGGSGD) are enriched in gly residues. ANK repeat units lie at residues 647–676 (QEQGIIHMVAGLGFEWAFYPILAHGVNVDF), 680–709 (KGWSALHWAAQFGSEKMVAALIASGASAGA), and 719–748 (NGKTAASIAASNGHKGLAGYLSEVALTNHL). Residues 753-786 (LEETENSKDTAQVQTEKTLNSISEQSPSGNEDQV) form a disordered region. Residues 761 to 785 (DTAQVQTEKTLNSISEQSPSGNEDQ) show a composition bias toward polar residues. 3 IQ domains span residues 798 to 827 (AAQAAARIQAAFRAHSFRKRKQREAALVAC), 855 to 884 (YNSAALSIQKNFRGYKDRKCFLELRQKVVK), and 878 to 907 (LRQKVVKIQAHVRGYQIRKNYKVICWAVRI). The segment at 903–925 (WAVRILDKVVLRWRRKGVGLRGF) is calmodulin-binding. Phosphoserine occurs at positions 935 and 962.

Belongs to the CAMTA family. As to expression, expressed in roots, stems, leaves, flowers and siliques.

Its subcellular location is the nucleus. Its function is as follows. Transcription activator that binds to the DNA consensus sequence 5'-[ACG]CGCG[GTC]-3'. Regulates transcriptional activity in response to calcium signals. Binds calmodulin in a calcium-dependent manner. Involved together with CAMTA2 and CAMTA3 in the positive regulation of a general stress response. The protein is Calmodulin-binding transcription activator 4 of Arabidopsis thaliana (Mouse-ear cress).